Consider the following 1193-residue polypeptide: Protein diaphanous homolog 3 (1193 aa).

The span at 1–10 (MERHQPRLHH) shows a compositional bias: basic residues. A disordered region spans residues 1–57 (MERHQPRLHHPAQGSAAGTPYPSSASLRGCRESKMPRRKGPQHPPPPSGPEEPGEKR). S26 carries the phosphoserine modification. Positions 36–60 (PRRKGPQHPPPPSGPEEPGEKRPKF) match the Nuclear localization signal motif. A Phosphothreonine modification is found at T68. Phosphoserine occurs at positions 77 and 175. The GBD/FH3 domain maps to 114-476 (PKPLSENELL…QIVLHRDGMD (363 aa)). Positions 497 to 554 (IDQAKLEEFEEKASELYKKFEKEFTDHQETQAELQKKEAKINELQAELQAFKSQFGAL) form a coiled coil. Positions 558 to 622 (CNIPLPPSKE…PPPLGFLGGQ (65 aa)) are disordered. Positions 561 to 631 (PLPPSKEGGT…QNSPPLPILP (71 aa)) constitute an FH1 domain. The span at 575–600 (LPPPPPLPSGGGVPPPPPPPPPPPLP) shows a compositional bias: pro residues. The residue at position 624 (S624) is a Phosphoserine. Positions 636 to 1034 (PKKEFKPEIS…EKRVRIAKEL (399 aa)) constitute an FH2 domain. The stretch at 1013 to 1056 (KENIKKREAEEKEKRVRIAKELAERERLERQQKKKRLLEMKTEG) forms a coiled coil. The 31-residue stretch at 1057–1087 (DETGVMDNLLEALQSGAAFRDRRKRTPMPKD) folds into the DAD domain. Phosphoserine occurs at positions 1093 and 1179. Residues 1184 to 1193 (EALLARLRAL) carry the Nuclear export signal motif.

This sequence belongs to the formin homology family. Diaphanous subfamily. Ubiquitinated.

Its subcellular location is the cytoplasm. It localises to the nucleus. Its function is as follows. Actin nucleation and elongation factor required for the assembly of F-actin structures, such as actin cables and stress fibers. Required for cytokinesis, stress fiber formation and transcriptional activation of the serum response factor. Binds to GTP-bound form of Rho and to profilin: acts in a Rho-dependent manner to recruit profilin to the membrane, where it promotes actin polymerization. DFR proteins couple Rho and Src tyrosine kinase during signaling and the regulation of actin dynamics. Also acts as an actin nucleation and elongation factor in the nucleus by promoting nuclear actin polymerization inside the nucleus to drive serum-dependent SRF-MRTFA activity. This is Protein diaphanous homolog 3 (DIAPH3) from Homo sapiens (Human).